The following is a 623-amino-acid chain: NADPH-dependent diflavin oxidoreductase 1 (623 aa).

In terms of domain architecture, Flavodoxin-like spans 8–153 (LLVLYASQTG…TLDPWMLSLW (146 aa)). FMN-binding positions include 14–19 (SQTGNA), 62–65 (STTG), and Asp135. Residues 221–467 (KPDCFLKMTR…SLPAPSQSLP (247 aa)) enclose the FAD-binding FR-type domain. Residues Arg369, 399-402 (RAFS), and 433-436 (GLCS) contribute to the FAD site. NADP(+) is bound by residues Thr475, 541–542 (SR), 547–551 (KVYVQ), and Asp583. Trp622 is an FAD binding site.

Belongs to the NADPH-dependent diflavin oxidoreductase NDOR1 family. This sequence in the N-terminal section; belongs to the flavodoxin family. It in the C-terminal section; belongs to the flavoprotein pyridine nucleotide cytochrome reductase family. Interacts with At5g18400. The cofactor is FAD. FMN is required as a cofactor. Widely expressed.

It localises to the cytoplasm. The protein localises to the nucleus. It catalyses the reaction 2 oxidized [2Fe-2S]-[protein] + NADPH = 2 reduced [2Fe-2S]-[protein] + NADP(+) + H(+). Its function is as follows. NADPH-dependent reductase which is a central component of the cytosolic iron-sulfur (Fe-S) protein assembly (CIA) machinery. Transfers electrons from NADPH via its FAD and FMN prosthetic groups to the [2Fe-2S] cluster of the anamorsin/DRE2 homolog, another key component of the CIA machinery. In turn, this reduced cluster provides electrons for assembly of cytosolic iron-sulfur cluster proteins. Catalyzes the NADP-dependent reduction of cytochrome c, but not cytochrome P450 in vitro. Required for embryo development. The sequence is that of NADPH-dependent diflavin oxidoreductase 1 (ATR3) from Arabidopsis thaliana (Mouse-ear cress).